A 138-amino-acid chain; its full sequence is MANVKTEKSAKFAWNEENTQQAVTMYQQLINENGLEFANSDGLKEIAKTVGAASPVSVPSKLTSAKAYQKSDKPRKVGGGSSIRKAHYVRVIAKHAIDSGIIKDADDLASLESAKLETLDAVAQLLGVADEVKQAAGE.

The protein belongs to the T5likevirus A2 protein family. In terms of assembly, interacts with A1 protein; the two proteins form heterooligomers.

Functionally, involved, together with A1 protein, in the second step transfer (SST) which allows the completion of viral DNA into the host cell. The polypeptide is Protein A2-A3 (A2-A3) (Escherichia coli (Enterobacteria phage BF23)).